The following is a 284-amino-acid chain: Nucleotide-binding protein in ptsO 5'region (284 aa).

8–15 provides a ligand contact to ATP; that stretch reads GRSGSGKS. Position 60-63 (60-63) interacts with GTP; it reads DARN.

The protein belongs to the RapZ-like family.

Functionally, displays ATPase and GTPase activities. In Pseudomonas putida (Arthrobacter siderocapsulatus), this protein is Nucleotide-binding protein in ptsO 5'region.